Consider the following 424-residue polypeptide: Inhibin beta A chain (424 aa).

A signal peptide spans methionine 1 to serine 20. Residues serine 21–arginine 308 constitute a propeptide that is removed on maturation. N-linked (GlcNAc...) asparagine glycosylation occurs at asparagine 165. Basic and acidic residues predominate over residues glutamate 264 to serine 275. The tract at residues glutamate 264–arginine 306 is disordered. Intrachain disulfides connect cysteine 312-cysteine 320, cysteine 319-cysteine 389, cysteine 348-cysteine 421, and cysteine 352-cysteine 423.

The protein belongs to the TGF-beta family. Dimeric, linked by one or more disulfide bonds. Inhibin A is a dimer of alpha/INHA and beta-A/INHBA. Activin A is a homodimer of beta-A/INHBA. Activin AB is a dimer of beta-A/INHBA and beta-B/INHBB. Interacts with FST and FSTL3; these interactions prevent activin A interaction to its type II receptor. Activin A interacts with ACVR2A. Activin A interacts with BMPR2. Inhibin A interacts with ACVR1; this interaction creates a non-signaling complex (NSC) that inhibits ACVR1-mediated BMP signaling. Inhibin A interacts with ACVR2A. Uterus, ovary and liver.

It localises to the secreted. Functionally, inhibins/activins are involved in regulating a number of diverse functions such as hypothalamic and pituitary hormone secretion, gonadal hormone secretion, germ cell development and maturation, erythroid differentiation, insulin secretion, nerve cell survival, embryonic axial development or bone growth, depending on their subunit composition. In terms of biological role, activin A is a homodimer of INHBA that plays a role in several essential biological processes including embryonic development, stem cell maintenance and differentiation, haematopoiesis, cell proliferation and tissue fibrosis. Signals through type I (such as ACVR1B or ACVR1C) and type II receptors (such as ACVR2A, ACVR2B or BMPR2) which, upon ligand binding, phosphorylate SMAD2 and SMAD3 intracellular signaling mediators that form a complex with SMAD4, translocate to the nucleus and modulate gene expression. Can also activate alternative non-canonical intracellular signaling pathways including the p38 MAPK, extracellular signal-regulated kinases 1/2 (ERK1/2) and c-Jun N-terminal kinases (JNKs) to modulate cell migration and differentiation. Alternatively, promotes osteoblastic differentiation via ACVRL1-SMAD1/5/9 pathway. In addition, can engage the type I receptor ACVR1 to form an ACVR1-activin A-type II receptor non-signaling complex (NSC) that renders receptors unavailable for engagement with BMPs, hence resulting in an apparent inhibition of ACVR1-mediated BMP signaling. Its function is as follows. Inhibin A is a dimer of alpha/INHA and beta-A/INHBA that functions as a feedback regulator in the hypothalamic-pituitary-gonadal (HPG) axis. Inhibits the secretion of FSH from the anterior pituitary gland by acting on pituitary gonadotrope cells. Antagonizes activin A by binding to the proteoglycan, betaglycan, and forming a stable complex with and, thereby, sequestering type II activin receptors while excluding type I receptor. The chain is Inhibin beta A chain (Inhba) from Mus musculus (Mouse).